We begin with the raw amino-acid sequence, 471 residues long: Glutamate--tRNA ligase (471 aa).

The 'HIGH' region signature appears at 9 to 19; that stretch reads PSPTGYLHVGG. Zn(2+) is bound by residues Cys-98, Cys-100, Cys-125, and His-127. A 'KMSKS' region motif is present at residues 237-241; it reads KLSKR. Lys-240 lines the ATP pocket.

The protein belongs to the class-I aminoacyl-tRNA synthetase family. Glutamate--tRNA ligase type 1 subfamily. As to quaternary structure, monomer. It depends on Zn(2+) as a cofactor.

It localises to the cytoplasm. The catalysed reaction is tRNA(Glu) + L-glutamate + ATP = L-glutamyl-tRNA(Glu) + AMP + diphosphate. Functionally, catalyzes the attachment of glutamate to tRNA(Glu) in a two-step reaction: glutamate is first activated by ATP to form Glu-AMP and then transferred to the acceptor end of tRNA(Glu). The protein is Glutamate--tRNA ligase of Salmonella dublin (strain CT_02021853).